The sequence spans 575 residues: Homocysteine/cysteine synthase (575 aa).

Lysine 376 carries the N6-(pyridoxal phosphate)lysine modification.

Belongs to the trans-sulfuration enzymes family. MET7 subfamily. Requires pyridoxal 5'-phosphate as cofactor.

It localises to the cytoplasm. It catalyses the reaction O-acetyl-L-homoserine + methanethiol = L-methionine + acetate + H(+). The catalysed reaction is O-acetyl-L-homoserine + hydrogen sulfide = L-homocysteine + acetate. It carries out the reaction O-acetyl-L-serine + hydrogen sulfide = L-cysteine + acetate. It participates in amino-acid biosynthesis; L-methionine biosynthesis via de novo pathway; L-homocysteine from O-acetyl-L-homoserine. Functionally, plays a role in inorganic sulfur assimilation during sulfur-limited conditions; catalyzes the conversion of O-acetyl-L-homoserine (OAH) into homocysteine in the methionine biosynthesis pathway. Also catalyzes the conversion of O-acetylserine (OAS) into cysteine, the last step in the cysteine biosynthesis pathway. However, it seems that in S.cerevisiae cysteine biosynthesis occurs exclusively through the cystathionine pathway and not via direct incorporation of sulfur into OAS. It therefore has no metabolic role in cysteine biosynthesis and may only have a regulatory role controlling OAS levels. In Saccharomyces cerevisiae (strain ATCC 204508 / S288c) (Baker's yeast), this protein is Homocysteine/cysteine synthase.